A 1032-amino-acid chain; its full sequence is Structural polyprotein (1032 aa).

D23 serves as a coordination point for a divalent metal cation. The region spanning 501–723 is the Peptidase S50 domain; the sequence is ADSPLGEEHW…QTLPHWTAGS (223 aa). S627 functions as the Nucleophile in the catalytic mechanism. Residue K670 is part of the active site. The segment at 986-1014 is disordered; it reads LVNQPATAPRVPPRRIVSAQTAQTDPPGR. The segment at 1021-1030 is interaction with VP1 protein; sequence LRRVRGEDND.

Homotrimer. A central divalent metal stabilizes the VP2 trimer. As to quaternary structure, homodimer. Interacts (via C-terminus) with VP1 in the cytoplasm. Capsid VP3 interacts with VP2. Post-translationally, specific enzymatic cleavages yield mature proteins. The capsid assembly seems to be regulated by polyprotein processing. The protease VP4 cleaves itself off the polyprotein, thus releasing pre-VP2 and VP3 within the infected cell. During capsid assembly, the C-terminus of pre-VP2 is further processed by VP4, giving rise to VP2, the external capsid protein and three small peptides that all stay closely associated with the capsid.

The protein localises to the virion. Its subcellular location is the host cytoplasm. In terms of biological role, capsid protein VP2 self assembles to form an icosahedral capsid with a T=13 symmetry, about 70 nm in diameter, and consisting of 260 VP2 trimers. The capsid encapsulates the genomic dsRNA. VP2 is also involved in attachment and entry into the host cell. Its function is as follows. The precursor of VP2 plays an important role in capsid assembly. First, pre-VP2 and VP2 oligomers assemble to form a procapsid. Then, the pre-VP2 intermediates may be processed into VP2 proteins by proteolytic cleavage mediated by VP4 to obtain the mature virion. The final capsid is composed of pentamers and hexamers but VP2 has a natural tendency to assemble into all-pentameric structures. Therefore pre-VP2 may be required to allow formation of the hexameric structures. Protease VP4 is a serine protease that cleaves the polyprotein into its final products. Pre-VP2 is first partially cleaved, and may be completely processed by VP4 upon capsid maturation. Functionally, capsid protein VP3 plays a key role in virion assembly by providing a scaffold for the capsid made of VP2. May self-assemble to form a T=4-like icosahedral inner-capsid composed of at least 180 trimers. Plays a role in genomic RNA packaging by recruiting VP1 into the capsid and interacting with the dsRNA genome segments to form a ribonucleoprotein complex. Additionally, the interaction of the VP3 C-terminal tail with VP1 removes the inherent structural blockade of the polymerase active site. Thus, VP3 can also function as a transcriptional activator. In terms of biological role, structural peptide 1 is a small peptide derived from pre-VP2 C-terminus. It destabilizes and perforates cell membranes, suggesting a role during entry. Its function is as follows. Structural peptide 2 is a small peptide derived from pre-VP2 C-terminus. It is not essential for the virus viability, but viral growth is affected when missing. Structural peptide 3 is a small peptide derived from pre-VP2 C-terminus. It is not essential for the virus viability, but viral growth is affected when missing. The sequence is that of Structural polyprotein from Drosophila melanogaster (Fruit fly).